We begin with the raw amino-acid sequence, 267 residues long: Hydroxynaphthalene reductase-like protein Arp2 (267 aa).

Residues Ile-25, Asn-45, Asp-71, and Asn-98 each coordinate NADP(+). Catalysis depends on proton donor residues Ser-147 and Ser-148. Residues Tyr-162, Lys-166, Val-195, and Thr-197 each coordinate NADP(+). Tyr-162 (proton acceptor) is an active-site residue. Lys-166 acts as the Lowers pKa of active site Tyr in catalysis.

This sequence belongs to the short-chain dehydrogenases/reductases (SDR) family.

In terms of biological role, hydroxynaphthalene reductase-like protein; part of the Pks2 gene cluster that mediates the formation of infectious structures (appressoria), enabling these fungi to kill insects faster. The product of the Pks2 gene cluster is different from the one of Pks1 and has still not been identified. The protein is Hydroxynaphthalene reductase-like protein Arp2 of Metarhizium brunneum (strain ARSEF 3297).